Reading from the N-terminus, the 161-residue chain is Regulator of ribonuclease activity A (161 aa).

This sequence belongs to the RraA family. As to quaternary structure, homotrimer. Binds to both RNA-binding sites in the C-terminal region of Rne and to RhlB.

The protein resides in the cytoplasm. Functionally, globally modulates RNA abundance by binding to RNase E (Rne) and regulating its endonucleolytic activity. Can modulate Rne action in a substrate-dependent manner by altering the composition of the degradosome. Modulates RNA-binding and helicase activities of the degradosome. This is Regulator of ribonuclease activity A from Alteromonas mediterranea (strain DSM 17117 / CIP 110805 / LMG 28347 / Deep ecotype).